The sequence spans 1058 residues: COP1-interacting protein 7 (1058 aa).

Disordered regions lie at residues 123–147 (LGGTWTSQKSTALSKTKGETDGDTV), 262–281 (HGNSMDASSQGSFETGQEGR), and 330–463 (MGDV…GNDN). Polar residues-rich tracts occupy residues 126–136 (TWTSQKSTALS) and 262–276 (HGNSMDASSQGSFET). Residues 340 to 347 (SKKKKKKK) carry the Nuclear localization signal 1 motif. The segment covering 340 to 353 (SKKKKKKKKNKKKS) has biased composition (basic residues). A compositionally biased stretch (acidic residues) spans 403–414 (DSDESGEEEGFV). The short motif at 431-438 (ERRHKSTS) is the Nuclear localization signal 2 element. Residues 432 to 446 (RRHKSTSHRQRKHKS) show a composition bias toward basic residues. Residues 447–462 (HNGDDDSSNKETKGND) are compositionally biased toward basic and acidic residues. The residue at position 477 (S477) is a Phosphoserine. Positions 708 to 887 (AGEQTLDGKE…KSVELSRDPS (180 aa)) are disordered. The segment covering 757-773 (SKSEMEEERKKRMEELL) has biased composition (basic and acidic residues). A Nuclear localization signal 3 motif is present at residues 764–771 (ERKKRMEE). Positions 783–808 (KSSGGSVSSSLASKKTPTVTKSVKSS) are enriched in low complexity. Composition is skewed to basic and acidic residues over residues 860–869 (KTEKAQEKKS) and 878–887 (KSVELSRDPS). Residues S915, S986, and S992 each carry the phosphoserine modification. A disordered region spans residues 1020 to 1041 (STPPATEADHSRKKWNSEETSP). The segment covering 1026 to 1040 (EADHSRKKWNSEETS) has biased composition (basic and acidic residues).

Interacts with COP1.

The protein resides in the nucleus. Its function is as follows. Exhibits transcriptional activation activity. Positive regulator of light-regulated genes, probably being a direct downstream target of COP1 for mediating light control of gene expression. The sequence is that of COP1-interacting protein 7 from Arabidopsis thaliana (Mouse-ear cress).